We begin with the raw amino-acid sequence, 296 residues long: Nicotinate dehydrogenase FAD-subunit (296 aa).

The FAD-binding PCMH-type domain maps to 1 to 179 (MKDFEFFAPK…TEVIIDRPDA (179 aa)). Residues 29–36 (IIAGGTDL), glycine 101, 110–114 (TIGGN), aspartate 123, arginine 160, methionine 169, and lysine 187 contribute to the FAD site.

As to quaternary structure, heterooctamer of NDHM, NDHL, NDHS and NDHF. Dimer of heterotetramers. The cofactor is FAD.

It carries out the reaction nicotinate + NADP(+) + H2O = 6-hydroxynicotinate + NADPH + H(+). The protein operates within cofactor degradation; nicotinate degradation; 6-hydroxynicotinate from nicotinate: step 1/1. Reversibly inactivated by selenide and sulfide. Not inhibited by cyanide. Catalyzes the hydroxylation of nicotinate to 6-hydroxynicotinate. Also active against 2-pyrazinecarboxylic acid, but inactive against other nicotinate analogs. This chain is Nicotinate dehydrogenase FAD-subunit (ndhF), found in Eubacterium barkeri (Clostridium barkeri).